The following is a 168-amino-acid chain: MTQHPPGDDRTNRIVAVTLDEESIGRSGPDIEHERAIAIYDLVEENLFAPEGADGAGPFTLHLGITANRLMFDIRKEDGTPVVTHLLSLSPFRRIVKDYFMICDSYYNAIRTATPDKIEAIDMGRRGIHDEGSRTLQERLKGKVRVDFETSRRLFTLITVLHWKGEGQ.

The protein belongs to the UPF0262 family.

The protein is UPF0262 protein BRADO6636 of Bradyrhizobium sp. (strain ORS 278).